We begin with the raw amino-acid sequence, 465 residues long: Glutamate--tRNA ligase (465 aa).

The short motif at Pro-10 to Gly-20 is the 'HIGH' region element. The Zn(2+) site is built by Cys-99, Cys-101, Cys-126, and Glu-128. The short motif at Lys-236 to Arg-240 is the 'KMSKS' region element. Lys-239 lines the ATP pocket.

The protein belongs to the class-I aminoacyl-tRNA synthetase family. Glutamate--tRNA ligase type 1 subfamily. As to quaternary structure, monomer. Zn(2+) serves as cofactor.

The protein localises to the cytoplasm. The enzyme catalyses tRNA(Glu) + L-glutamate + ATP = L-glutamyl-tRNA(Glu) + AMP + diphosphate. Catalyzes the attachment of glutamate to tRNA(Glu) in a two-step reaction: glutamate is first activated by ATP to form Glu-AMP and then transferred to the acceptor end of tRNA(Glu). This Lawsonia intracellularis (strain PHE/MN1-00) protein is Glutamate--tRNA ligase.